The sequence spans 203 residues: Dephospho-CoA kinase (203 aa).

The region spanning 4-203 is the DPCK domain; sequence VIGITGGIAT…EEGYIQSESE (200 aa). Residue 12–17 participates in ATP binding; it reads ATGKST.

The protein belongs to the CoaE family.

Its subcellular location is the cytoplasm. The enzyme catalyses 3'-dephospho-CoA + ATP = ADP + CoA + H(+). It functions in the pathway cofactor biosynthesis; coenzyme A biosynthesis; CoA from (R)-pantothenate: step 5/5. Functionally, catalyzes the phosphorylation of the 3'-hydroxyl group of dephosphocoenzyme A to form coenzyme A. In Staphylococcus epidermidis (strain ATCC 12228 / FDA PCI 1200), this protein is Dephospho-CoA kinase.